The following is a 218-amino-acid chain: Ras-related protein Rab-4A (218 aa).

6 residues coordinate GDP: Gly-23, Thr-24, Gly-25, Lys-26, Ser-27, and Cys-28. Residues Gly-23, Thr-24, Gly-25, Lys-26, Ser-27, Cys-28, Ser-42, His-44, and Thr-45 each contribute to the GTP site. Mg(2+) is bound at residue Ser-27. The Switch 1 motif lies at 44–49; that stretch reads HTIGVE. Residues Thr-45 and Asp-68 each coordinate Mg(2+). Residues 70–79 carry the Switch 2 motif; sequence AGQERFRSVT. Gly-71 serves as a coordination point for GTP. The residue at position 72 (Gln-72) is a 5-glutamyl serotonin. Residues Asn-126, Lys-127, Asp-129, Ala-157, and Leu-158 each coordinate GDP. GTP-binding residues include Asn-126, Lys-127, Asp-129, Ala-157, and Leu-158. A Phosphoserine modification is found at Ser-190. Ser-204 bears the Phosphoserine; by CDK1 mark. 2 S-geranylgeranyl cysteine lipidation sites follow: Cys-216 and Cys-218. Cys-218 bears the Cysteine methyl ester mark.

Belongs to the small GTPase superfamily. Rab family. In terms of assembly, interacts with SGSM1, SGSM2 and SGSM3. Interacts with RAB11FIP1, RABEP1, ZFYVE20 and RUFY1. Interacts (membrane-bound form) with NDRG1; the interaction involves NDRG1 in vesicular recycling of E-cadherin. Interacts (in GTP-bound form) with GRIPAP1 (via N-terminus). Interacts with RABEP1 and RBSN. Does not interact with HPS4. Interacts with RABEP2; this interaction may mediate VEGFR2 cell surface expression. The cofactor is Mg(2+). Post-translationally, phosphorylated by CDK1 kinase during mitosis. In terms of processing, serotonylation of Gln-72 by TGM2 during activation and aggregation of platelets leads to constitutive activation of GTPase activity.

It localises to the membrane. The protein resides in the cytoplasm. The protein localises to the early endosome membrane. It is found in the recycling endosome membrane. It catalyses the reaction GTP + H2O = GDP + phosphate + H(+). Its activity is regulated as follows. Regulated by guanine nucleotide exchange factors (GEFs) which promote the exchange of bound GDP for free GTP. Regulated by GTPase activating proteins (GAPs) which increase the GTP hydrolysis activity. Inhibited by GDP dissociation inhibitors (GDIs). Functionally, the small GTPases Rab are key regulators of intracellular membrane trafficking, from the formation of transport vesicles to their fusion with membranes. Rabs cycle between an inactive GDP-bound form and an active GTP-bound form that is able to recruit to membranes different sets of downstream effectors directly responsible for vesicle formation, movement, tethering and fusion. RAB4A is involved in protein transport. Also plays a role in vesicular traffic. Mediates VEGFR2 endosomal trafficking to enhance VEGFR2 signaling. Acts as a regulator of platelet alpha-granule release during activation and aggregation of platelets. This is Ras-related protein Rab-4A from Homo sapiens (Human).